Here is a 492-residue protein sequence, read N- to C-terminus: Catalase isozyme 1 (492 aa).

Active-site residues include histidine 65 and asparagine 138. Position 348 (tyrosine 348) interacts with heme.

Belongs to the catalase family. As to quaternary structure, homotetramer. Heme is required as a cofactor. High expression in seeds and early seedlings.

The protein localises to the glyoxysome. The catalysed reaction is 2 H2O2 = O2 + 2 H2O. Occurs in almost all aerobically respiring organisms and serves to protect cells from the toxic effects of hydrogen peroxide. The polypeptide is Catalase isozyme 1 (CAT1) (Cucurbita pepo (Vegetable marrow)).